Here is a 263-residue protein sequence, read N- to C-terminus: Metaxin-2 (263 aa).

An N-acetylserine modification is found at Ser2.

Belongs to the metaxin family. As to quaternary structure, interacts with MTX1/metaxin-1. Associates with the mitochondrial contact site and cristae organizing system (MICOS) complex, composed of at least MICOS10/MIC10, CHCHD3/MIC19, CHCHD6/MIC25, APOOL/MIC27, IMMT/MIC60, APOO/MIC23/MIC26 and QIL1/MIC13. This complex was also known under the names MINOS or MitOS complex. The MICOS complex associates with mitochondrial outer membrane proteins SAMM50, MTX1 and MTX2 (together described as components of the mitochondrial outer membrane sorting assembly machinery (SAM) complex) and DNAJC11, mitochondrial inner membrane protein TMEM11 and with HSPA9. The MICOS and SAM complexes together with DNAJC11 are part of a large protein complex spanning both membranes termed the mitochondrial intermembrane space bridging (MIB) complex.

The protein resides in the mitochondrion outer membrane. The protein localises to the mitochondrion. Functionally, involved in transport of proteins into the mitochondrion. This Mus musculus (Mouse) protein is Metaxin-2 (Mtx2).